The sequence spans 41 residues: MTPMRITVWRERLQQMRPQRKLLKQTQQRRLLHQLQQRKLL.

Functionally, involved in viral RNA replication. This chain is Replication-associated protein, found in Potato leafroll virus (strain Potato/Scotland/strain 1/1984) (PLrV).